A 220-amino-acid chain; its full sequence is Orotate phosphoribosyltransferase (220 aa).

Residue Lys26 participates in 5-phospho-alpha-D-ribose 1-diphosphate binding. 34-35 is an orotate binding site; that stretch reads FF. Residues 72–73, Arg99, Lys100, Lys103, His105, and 125–133 contribute to the 5-phospho-alpha-D-ribose 1-diphosphate site; these read YK and DDVISAGTS. Orotate-binding residues include Ser129 and Arg157.

It belongs to the purine/pyrimidine phosphoribosyltransferase family. PyrE subfamily. Homodimer. The cofactor is Mg(2+).

It catalyses the reaction orotidine 5'-phosphate + diphosphate = orotate + 5-phospho-alpha-D-ribose 1-diphosphate. The protein operates within pyrimidine metabolism; UMP biosynthesis via de novo pathway; UMP from orotate: step 1/2. In terms of biological role, catalyzes the transfer of a ribosyl phosphate group from 5-phosphoribose 1-diphosphate to orotate, leading to the formation of orotidine monophosphate (OMP). This chain is Orotate phosphoribosyltransferase, found in Nitrosococcus oceani (strain ATCC 19707 / BCRC 17464 / JCM 30415 / NCIMB 11848 / C-107).